A 422-amino-acid polypeptide reads, in one-letter code: Secernin-3 (422 aa).

The propeptide occupies 1–5 (MEPCS). Cys-6 is an active-site residue. Cys-6 carries the post-translational modification Glyoxylic acid (Cys); alternate. At Cys-6 the chain carries Pyruvic acid (Cys); alternate.

This sequence belongs to the peptidase C69 family. Secernin subfamily.

In terms of biological role, plays a role in thermal nociception. This chain is Secernin-3 (SCRN3), found in Bos taurus (Bovine).